Consider the following 297-residue polypeptide: 4-hydroxy-tetrahydrodipicolinate synthase (297 aa).

T49 provides a ligand contact to pyruvate. Residue Y137 is the Proton donor/acceptor of the active site. K165 acts as the Schiff-base intermediate with substrate in catalysis. I208 is a pyruvate binding site.

The protein belongs to the DapA family. In terms of assembly, homotetramer; dimer of dimers.

Its subcellular location is the cytoplasm. The catalysed reaction is L-aspartate 4-semialdehyde + pyruvate = (2S,4S)-4-hydroxy-2,3,4,5-tetrahydrodipicolinate + H2O + H(+). The protein operates within amino-acid biosynthesis; L-lysine biosynthesis via DAP pathway; (S)-tetrahydrodipicolinate from L-aspartate: step 3/4. Functionally, catalyzes the condensation of (S)-aspartate-beta-semialdehyde [(S)-ASA] and pyruvate to 4-hydroxy-tetrahydrodipicolinate (HTPA). This Gluconacetobacter diazotrophicus (strain ATCC 49037 / DSM 5601 / CCUG 37298 / CIP 103539 / LMG 7603 / PAl5) protein is 4-hydroxy-tetrahydrodipicolinate synthase.